The chain runs to 316 residues: Mycothiol acetyltransferase (316 aa).

N-acetyltransferase domains are found at residues 16 to 153 and 156 to 316; these read REVR…VPAV and VRIR…PAAN. E36 contacts 1D-myo-inositol 2-(L-cysteinylamino)-2-deoxy-alpha-D-glucopyranoside. Residues 83 to 85 and 91 to 96 each bind acetyl-CoA; these read LVV and RRGIGS. E183, K228, and E238 together coordinate 1D-myo-inositol 2-(L-cysteinylamino)-2-deoxy-alpha-D-glucopyranoside. Acetyl-CoA-binding positions include 242 to 244 and 249 to 255; these read VGV and QGRGLGQ. Y283 lines the 1D-myo-inositol 2-(L-cysteinylamino)-2-deoxy-alpha-D-glucopyranoside pocket. 288 to 293 provides a ligand contact to acetyl-CoA; it reads NVAAVR.

This sequence belongs to the acetyltransferase family. MshD subfamily. Monomer.

The catalysed reaction is 1D-myo-inositol 2-(L-cysteinylamino)-2-deoxy-alpha-D-glucopyranoside + acetyl-CoA = mycothiol + CoA + H(+). In terms of biological role, catalyzes the transfer of acetyl from acetyl-CoA to desacetylmycothiol (Cys-GlcN-Ins) to form mycothiol. The polypeptide is Mycothiol acetyltransferase (Mycolicibacterium paratuberculosis (strain ATCC BAA-968 / K-10) (Mycobacterium paratuberculosis)).